The sequence spans 602 residues: Elongation factor 4 (602 aa).

A tr-type G domain is found at 8 to 190; sequence DLIRNFSIVA…AIVHRLPPPK (183 aa). GTP contacts are provided by residues 20–25 and 137–140; these read DHGKST and NKID.

The protein belongs to the TRAFAC class translation factor GTPase superfamily. Classic translation factor GTPase family. LepA subfamily.

Its subcellular location is the cell inner membrane. It carries out the reaction GTP + H2O = GDP + phosphate + H(+). Functionally, required for accurate and efficient protein synthesis under certain stress conditions. May act as a fidelity factor of the translation reaction, by catalyzing a one-codon backward translocation of tRNAs on improperly translocated ribosomes. Back-translocation proceeds from a post-translocation (POST) complex to a pre-translocation (PRE) complex, thus giving elongation factor G a second chance to translocate the tRNAs correctly. Binds to ribosomes in a GTP-dependent manner. In Cereibacter sphaeroides (strain ATCC 17029 / ATH 2.4.9) (Rhodobacter sphaeroides), this protein is Elongation factor 4.